A 509-amino-acid polypeptide reads, in one-letter code: Activin receptor type-1 (509 aa).

An N-terminal signal peptide occupies residues 1–20 (MVDGVMILPVLMMMAFPSPS). Topologically, residues 21 to 123 (VEDEKPKVNQ…FPGTQNFHLE (103 aa)) are extracellular. Asn-102 carries N-linked (GlcNAc...) asparagine glycosylation. The helical transmembrane segment at 124-146 (VGLIILSVVFAVCLLACILGVAL) threads the bilayer. At 147-509 (RKFKRRNQER…NSLDKLKTDC (363 aa)) the chain is on the cytoplasmic side. Positions 178-207 (STLAELLDHSCTSGSGSGLPFLVQRTVARQ) constitute a GS domain. Positions 208–502 (ITLLECVGKG…KTLTKIDNSL (295 aa)) constitute a Protein kinase domain. Residues 214-222 (VGKGRYGEV) and Lys-235 each bind ATP. Asp-336 (proton acceptor) is an active-site residue. Ser-501 bears the Phosphoserine mark.

It belongs to the protein kinase superfamily. TKL Ser/Thr protein kinase family. TGFB receptor subfamily. Interacts with FKBP1A. Interacts with FCHO1. Interacts with CLU. Interacts with type II receptors AMHR2 and ACVR2A. Interacts with BMP7. Interacts with BMP9. Interacts with BMP6 (when glycosylated); the interaction may induce HAMP expression. Interacts with TSC22D1/TSC-22. Mg(2+) serves as cofactor. Mn(2+) is required as a cofactor. As to expression, highly expressed in bone during developmental stages. Expressed in normal parenchymal cells, endothelial cells, fibroblasts and tumor-derived epithelial cells.

It is found in the membrane. The enzyme catalyses L-threonyl-[receptor-protein] + ATP = O-phospho-L-threonyl-[receptor-protein] + ADP + H(+). It carries out the reaction L-seryl-[receptor-protein] + ATP = O-phospho-L-seryl-[receptor-protein] + ADP + H(+). Bone morphogenetic protein (BMP) type I receptor that is involved in a wide variety of biological processes, including bone, heart, cartilage, nervous, and reproductive system development and regulation. As a type I receptor, forms heterotetrameric receptor complexes with the type II receptors AMHR2, ACVR2A ors ACVR2B. Upon binding of ligands such as BMP7 or BMP9 to the heteromeric complexes, type II receptors transphosphorylate ACVR1 intracellular domain. In turn, ACVR1 kinase domain is activated and subsequently phosphorylates SMAD1/5/8 proteins that transduce the signal. In addition to its role in mediating BMP pathway-specific signaling, suppresses TGFbeta/activin pathway signaling by interfering with the binding of activin to its type II receptor. Besides canonical SMAD signaling, can activate non-canonical pathways such as p38 mitogen-activated protein kinases/MAPKs. May promote the expression of HAMP, potentially via its interaction with BMP6. The polypeptide is Activin receptor type-1 (Acvr1) (Mus musculus (Mouse)).